Consider the following 1407-residue polypeptide: DNA-directed RNA polymerase subunit beta' (1407 aa).

The Zn(2+) site is built by Cys70, Cys72, Cys85, and Cys88. Asp460, Asp462, and Asp464 together coordinate Mg(2+). Position 972 is an N6-acetyllysine (Lys972).

Belongs to the RNA polymerase beta' chain family. In terms of assembly, the RNAP catalytic core consists of 2 alpha, 1 beta, 1 beta' and 1 omega subunit. When a sigma factor is associated with the core the holoenzyme is formed, which can initiate transcription. It depends on Mg(2+) as a cofactor. Requires Zn(2+) as cofactor.

It catalyses the reaction RNA(n) + a ribonucleoside 5'-triphosphate = RNA(n+1) + diphosphate. Functionally, DNA-dependent RNA polymerase catalyzes the transcription of DNA into RNA using the four ribonucleoside triphosphates as substrates. The polypeptide is DNA-directed RNA polymerase subunit beta' (Escherichia coli O6:K15:H31 (strain 536 / UPEC)).